Consider the following 420-residue polypeptide: Serine hydroxymethyltransferase (420 aa).

Residues Leu121 and 125 to 127 (GHL) each bind (6S)-5,6,7,8-tetrahydrofolate. At Lys229 the chain carries N6-(pyridoxal phosphate)lysine.

It belongs to the SHMT family. In terms of assembly, homodimer. Requires pyridoxal 5'-phosphate as cofactor.

The protein localises to the cytoplasm. It catalyses the reaction (6R)-5,10-methylene-5,6,7,8-tetrahydrofolate + glycine + H2O = (6S)-5,6,7,8-tetrahydrofolate + L-serine. Its pathway is one-carbon metabolism; tetrahydrofolate interconversion. The protein operates within amino-acid biosynthesis; glycine biosynthesis; glycine from L-serine: step 1/1. Functionally, catalyzes the reversible interconversion of serine and glycine with tetrahydrofolate (THF) serving as the one-carbon carrier. This reaction serves as the major source of one-carbon groups required for the biosynthesis of purines, thymidylate, methionine, and other important biomolecules. Also exhibits THF-independent aldolase activity toward beta-hydroxyamino acids, producing glycine and aldehydes, via a retro-aldol mechanism. This is Serine hydroxymethyltransferase from Aggregatibacter actinomycetemcomitans (Actinobacillus actinomycetemcomitans).